The following is a 436-amino-acid chain: Chromosomal replication initiator protein DnaA (436 aa).

The domain I, interacts with DnaA modulators stretch occupies residues 1 to 80 (MSHEAVWQHV…QAPRFELRVV (80 aa)). A domain II region spans residues 80-100 (VPGVVVQEDIFQAAPAEAPRP). The tract at residues 101–317 (KLNPKYTFEN…GALMRAIAFA (217 aa)) is domain III, AAA+ region. The ATP site is built by glycine 145, glycine 147, lysine 148, and threonine 149. Residues 318–436 (SLNGVELTRA…LLRTLREACT (119 aa)) form a domain IV, binds dsDNA region.

It belongs to the DnaA family. Oligomerizes as a right-handed, spiral filament on DNA at oriC.

The protein resides in the cytoplasm. The catalysed reaction is ATP + H2O = ADP + phosphate + H(+). Plays an essential role in the initiation and regulation of chromosomal replication. ATP-DnaA binds to the origin of replication (oriC) to initiate formation of the DNA replication initiation complex once per cell cycle. Binds the DnaA box (a 9 base pair repeat at the origin) and separates the double-stranded (ds)DNA. Forms a right-handed helical filament on oriC DNA; dsDNA binds to the exterior of the filament while single-stranded (ss)DNA is stabiized in the filament's interior. The ATP-DnaA-oriC complex binds and stabilizes one strand of the AT-rich DNA unwinding element (DUE), permitting loading of DNA polymerase. After initiation quickly degrades to an ADP-DnaA complex that is not apt for DNA replication. Binds acidic phospholipids. Its function is as follows. The DnaA box consensus is 5'-TTATC[CA]A[CA]A-3' in this bacterium; oriC consists of 13 clustered DnaA boxes and a 40 base pair AT-rich region. ATP-DnaA binds cooperatively to multiple DnaA boxes, while ADP-DnaA binds with low cooperativity to the individual DnaA boxes. About 16-18 DnaA protein molecules bind their sites in oriC. Has a slow ATPase activity. Binds linear and supercoiled DNA. The polypeptide is Chromosomal replication initiator protein DnaA (Thermus thermophilus (strain ATCC 27634 / DSM 579 / HB8)).